The primary structure comprises 120 residues: ATP-dependent Clp protease adapter protein ClpS (120 aa).

Positions 9–32 (LTFNQDHPAEHEDDSSGIAVQESK) are disordered.

The protein belongs to the ClpS family. In terms of assembly, binds to the N-terminal domain of the chaperone ClpA.

Involved in the modulation of the specificity of the ClpAP-mediated ATP-dependent protein degradation. This is ATP-dependent Clp protease adapter protein ClpS from Ectopseudomonas mendocina (strain ymp) (Pseudomonas mendocina).